The following is a 304-amino-acid chain: Dihydroorotate dehydrogenase B (NAD(+)), catalytic subunit (304 aa).

Residues Ser-22 and Lys-46–Gly-47 contribute to the FMN site. Residues Lys-46 and Asn-70–Leu-74 contribute to the substrate site. Residues Asn-100 and Asn-128 each coordinate FMN. Asn-128 serves as a coordination point for substrate. Cys-131 functions as the Nucleophile in the catalytic mechanism. FMN contacts are provided by Lys-166 and Ile-192. Asn-193–Thr-194 lines the substrate pocket. Residues Gly-218, Gly-244–Gly-245, and Gly-266–Thr-267 contribute to the FMN site.

It belongs to the dihydroorotate dehydrogenase family. Type 1 subfamily. Heterotetramer of 2 PyrK and 2 PyrD type B subunits. Requires FMN as cofactor.

It localises to the cytoplasm. It carries out the reaction (S)-dihydroorotate + NAD(+) = orotate + NADH + H(+). The protein operates within pyrimidine metabolism; UMP biosynthesis via de novo pathway; orotate from (S)-dihydroorotate (NAD(+) route): step 1/1. Catalyzes the conversion of dihydroorotate to orotate with NAD(+) as electron acceptor. In Pelobacter propionicus (strain DSM 2379 / NBRC 103807 / OttBd1), this protein is Dihydroorotate dehydrogenase B (NAD(+)), catalytic subunit (pyrD).